We begin with the raw amino-acid sequence, 369 residues long: tRNA/tmRNA (uracil-C(5))-methyltransferase (369 aa).

Residues Gln190, Tyr218, Asn223, Glu239, and Asp301 each contribute to the S-adenosyl-L-methionine site. Catalysis depends on Cys326, which acts as the Nucleophile. The active-site Proton acceptor is Glu360.

The protein belongs to the class I-like SAM-binding methyltransferase superfamily. RNA M5U methyltransferase family. TrmA subfamily.

The enzyme catalyses uridine(54) in tRNA + S-adenosyl-L-methionine = 5-methyluridine(54) in tRNA + S-adenosyl-L-homocysteine + H(+). The catalysed reaction is uridine(341) in tmRNA + S-adenosyl-L-methionine = 5-methyluridine(341) in tmRNA + S-adenosyl-L-homocysteine + H(+). Dual-specificity methyltransferase that catalyzes the formation of 5-methyluridine at position 54 (m5U54) in all tRNAs, and that of position 341 (m5U341) in tmRNA (transfer-mRNA). This Vibrio parahaemolyticus serotype O3:K6 (strain RIMD 2210633) protein is tRNA/tmRNA (uracil-C(5))-methyltransferase.